The following is a 285-amino-acid chain: Acetyl-coenzyme A carboxylase carboxyl transferase subunit beta (285 aa).

A CoA carboxyltransferase N-terminal domain is found at 29–285 (IMTKCPKCKK…ILKIHQEVTK (257 aa)). Residues cysteine 33, cysteine 36, cysteine 52, and cysteine 55 each contribute to the Zn(2+) site. The C4-type zinc finger occupies 33-55 (CPKCKKIMYTKELAENLNVCFNC).

This sequence belongs to the AccD/PCCB family. Acetyl-CoA carboxylase is a heterohexamer composed of biotin carboxyl carrier protein (AccB), biotin carboxylase (AccC) and two subunits each of ACCase subunit alpha (AccA) and ACCase subunit beta (AccD). Requires Zn(2+) as cofactor.

Its subcellular location is the cytoplasm. The catalysed reaction is N(6)-carboxybiotinyl-L-lysyl-[protein] + acetyl-CoA = N(6)-biotinyl-L-lysyl-[protein] + malonyl-CoA. It participates in lipid metabolism; malonyl-CoA biosynthesis; malonyl-CoA from acetyl-CoA: step 1/1. Component of the acetyl coenzyme A carboxylase (ACC) complex. Biotin carboxylase (BC) catalyzes the carboxylation of biotin on its carrier protein (BCCP) and then the CO(2) group is transferred by the transcarboxylase to acetyl-CoA to form malonyl-CoA. The polypeptide is Acetyl-coenzyme A carboxylase carboxyl transferase subunit beta (Staphylococcus aureus (strain Newman)).